Here is a 180-residue protein sequence, read N- to C-terminus: Bifunctional protein PyrR (180 aa).

The PRPP-binding motif lies at 99–111 (VILVDDVLYTCRT).

Belongs to the purine/pyrimidine phosphoribosyltransferase family. PyrR subfamily. As to quaternary structure, homodimer and homohexamer; in equilibrium.

It catalyses the reaction UMP + diphosphate = 5-phospho-alpha-D-ribose 1-diphosphate + uracil. Its function is as follows. Regulates transcriptional attenuation of the pyrimidine nucleotide (pyr) operon by binding in a uridine-dependent manner to specific sites on pyr mRNA. This disrupts an antiterminator hairpin in the RNA and favors formation of a downstream transcription terminator, leading to a reduced expression of downstream genes. In terms of biological role, also displays a weak uracil phosphoribosyltransferase activity which is not physiologically significant. This Clostridium botulinum (strain Alaska E43 / Type E3) protein is Bifunctional protein PyrR.